The sequence spans 236 residues: MATPHINAKDGAFAETVLMPGDPLRAQLIAETFLEGAELVTNVRNVFGYTGTYKGKRLSVMAHGMGIPSASIYTTELIKDYGVKNIIRIGSCGAVTPDIKLRELFVAMGASTDSKVNRMRFNDHDYAAIADYTLLRTVVDTAAEQGKKVTVGNVFSADLFYGVQPNMLDVLSKLQVNVIEMELAGIYSVAAQYGARAVGILTVSDIIPTGEATSAEERQTSFRDMMEVALDAAIKL.

Residue H5 coordinates a purine D-ribonucleoside. Phosphate is bound by residues G21, R25, R44, and 88–91; that span reads RIGS. A purine D-ribonucleoside-binding positions include 180-182 and 204-205; these read EME and SD. Catalysis depends on D205, which acts as the Proton donor.

The protein belongs to the PNP/UDP phosphorylase family. Homohexamer; trimer of homodimers.

The enzyme catalyses a purine D-ribonucleoside + phosphate = a purine nucleobase + alpha-D-ribose 1-phosphate. It carries out the reaction a purine 2'-deoxy-D-ribonucleoside + phosphate = a purine nucleobase + 2-deoxy-alpha-D-ribose 1-phosphate. In terms of biological role, catalyzes the reversible phosphorolytic breakdown of the N-glycosidic bond in the beta-(deoxy)ribonucleoside molecules, with the formation of the corresponding free purine bases and pentose-1-phosphate. The polypeptide is Purine nucleoside phosphorylase DeoD-type (Chromobacterium violaceum (strain ATCC 12472 / DSM 30191 / JCM 1249 / CCUG 213 / NBRC 12614 / NCIMB 9131 / NCTC 9757 / MK)).